Here is a 171-residue protein sequence, read N- to C-terminus: Endoribonuclease YbeY (171 aa).

Residues His126, His130, and His136 each contribute to the Zn(2+) site.

This sequence belongs to the endoribonuclease YbeY family. Zn(2+) is required as a cofactor.

The protein resides in the cytoplasm. Functionally, single strand-specific metallo-endoribonuclease involved in late-stage 70S ribosome quality control and in maturation of the 3' terminus of the 16S rRNA. This chain is Endoribonuclease YbeY, found in Rhizobium etli (strain ATCC 51251 / DSM 11541 / JCM 21823 / NBRC 15573 / CFN 42).